The primary structure comprises 209 residues: B3 domain-containing protein At2g31420 (209 aa).

The TF-B3 DNA-binding region spans 101 to 198; the sequence is LSKLEKSDFL…KLCFALSSPT (98 aa).

The protein resides in the nucleus. The polypeptide is B3 domain-containing protein At2g31420 (Arabidopsis thaliana (Mouse-ear cress)).